A 358-amino-acid chain; its full sequence is Programmed cell death protein 2-like (358 aa).

The residue at position 2 (Ala-2) is an N-acetylalanine. Ser-20 carries the post-translational modification Phosphoserine. At Thr-22 the chain carries Phosphothreonine.

In terms of tissue distribution, higher expression in lung, colon, mammary gland, cervix, stomach and small intestine.

In terms of biological role, over-expression suppresses AP1, CREB, NFAT, and NF-kB transcriptional activation, and delays cell cycle progression at S phase. The chain is Programmed cell death protein 2-like (PDCD2L) from Homo sapiens (Human).